The chain runs to 868 residues: E3 ubiquitin-protein ligase TRIM71 (868 aa).

Ala2 carries the N-acetylalanine modification. Residues 12–89 form an RING-type zinc finger; the sequence is CLLCKEMCGS…PLKLRCPVCD (78 aa). A compositionally biased stretch (low complexity) spans 26–41; sequence SSNSSASSSSSQTSTS. 2 disordered regions span residues 26–50 and 121–186; these read SSNS…GGPG and ADEP…GSPS. Residues 142–153 show a composition bias toward basic residues; it reads SNHRHHAHHAHP. Over residues 159–176 the composition is skewed to pro residues; sequence APPPPLPPAPPPPAPPRS. The segment covering 177–186 has biased composition (low complexity); sequence APGGPAGSPS. A B box-type 1; atypical zinc finger spans residues 191–238; the sequence is RRPHGCSSCDEGNAASSRCLDCQEHLCDNCVRAHQRVRLTKDHYIERG. A B box-type 2 zinc finger spans residues 273-314; it reads ERLGFCQHHDDEVLHLYCDTCSVPICRECTVGRHGGHSFVYL. 4 residues coordinate Zn(2+): Cys278, His281, Cys301, and His306. Residues 391–427 are a coiled coil; the sequence is QVKAKSLYLQVEKLRQNLNKLESTISAVQQVLEEGRA. The stretch at 479–580 is one Filamin repeat; it reads SSGAFAPLTK…IENSPFKVVV (102 aa). NHL repeat units follow at residues 593–636, 640–683, 687–730, 734–777, 781–824, and 828–868; these read GLSF…FKPC, HHKF…FTFE, LLKF…FGPD, LNKY…IHPD, ARFL…FESN, and LCKF…ILIF.

Belongs to the TRIM/RBCC family. In terms of assembly, interacts (via NHL repeats) with AGO2; the interaction increases in presence of RNA. Interacts with HSP90AA1. Interacts (via NHL repeats) with MOV10, PABPC1, PUM1, PUM2, STAU2, XRN1 and XRN2 in an RNA-dependent manner. Interacts with SHCBP1; leading to enhance its stability. Post-translationally, autoubiquitinated.

Its subcellular location is the cytoplasm. The protein localises to the P-body. The enzyme catalyses S-ubiquitinyl-[E2 ubiquitin-conjugating enzyme]-L-cysteine + [acceptor protein]-L-lysine = [E2 ubiquitin-conjugating enzyme]-L-cysteine + N(6)-ubiquitinyl-[acceptor protein]-L-lysine.. Its pathway is protein modification; protein ubiquitination. E3 ubiquitin-protein ligase that cooperates with the microRNAs (miRNAs) machinery and promotes embryonic stem cells proliferation and maintenance. Binds to miRNAs and associates with AGO2, participating in post-transcriptional repression of transcripts such as CDKN1A. In addition, participates in post-transcriptional mRNA repression in a miRNA independent mechanism. Facilitates the G1-S transition to promote rapid embryonic stem cell self-renewal by repressing CDKN1A expression. Required to maintain proliferation and prevent premature differentiation of neural progenitor cells during early neural development: positively regulates FGF signaling by controlling the stability of SHCBP1. Specific regulator of miRNA biogenesis. Binds to miRNA MIR29A hairpin and postranscriptionally modulates MIR29A levels, which indirectly regulates TET proteins expression. The polypeptide is E3 ubiquitin-protein ligase TRIM71 (TRIM71) (Bos taurus (Bovine)).